Reading from the N-terminus, the 22-residue chain is Peroxidase 5 (22 aa).

Belongs to the peroxidase family. Classical plant (class III) peroxidase subfamily. The cofactor is heme b. Ca(2+) is required as a cofactor.

The protein localises to the secreted. It localises to the cell wall. The enzyme catalyses 2 a phenolic donor + H2O2 = 2 a phenolic radical donor + 2 H2O. In terms of biological role, removal of H(2)O(2), oxidation of toxic reductants, biosynthesis and degradation of lignin, suberization, auxin catabolism, response to environmental stresses such as wounding, pathogen attack and oxidative stress. These functions might be dependent on each isozyme/isoform in each plant tissue. The chain is Peroxidase 5 from Cycas revoluta (Sago palm).